The primary structure comprises 175 residues: MSGKELNKIVAAILFASLIAMMVGFVANILYKPTLELQHRGYSVAVQESSENQNTTALEQAPVNIPELMKTANADNGREIAKKCLMCHSLDKDGPNKLGPHLWDVTGRPKASIADYKYSPALSKLGGVWDDDSLFAFLHKPSSYAPGTKMSFAGISKPQDIADVILFLKTYVHDK.

Residues 1-8 lie on the Cytoplasmic side of the membrane; that stretch reads MSGKELNK. The chain crosses the membrane as a helical; Signal-anchor span at residues 9 to 29; it reads IVAAILFASLIAMMVGFVANI. The Periplasmic portion of the chain corresponds to 30-175; that stretch reads LYKPTLELQH…LFLKTYVHDK (146 aa). Heme c-binding residues include C84, C87, H88, and M150.

Belongs to the cytochrome c family. Post-translationally, binds 1 heme c group covalently per subunit.

Its subcellular location is the cell membrane. May be involved in electron transfer from bc1 complex to aa3. This chain is Cytochrome c homolog (cycM), found in Rickettsia conorii (strain ATCC VR-613 / Malish 7).